A 74-amino-acid chain; its full sequence is Conotoxin AbVIA (74 aa).

The first 17 residues, 1–17 (VLIIAVLFLTACQLTTA), serve as a signal peptide directing secretion. Residues 18-38 (VTSSRGEQKHRALRSTDKKFK) constitute a propeptide that is removed on maturation. 3 disulfides stabilise this stretch: C43/C57, C50/C61, and C56/C68. The residue at position 73 (S73) is a Serine amide.

It belongs to the conotoxin O1 superfamily. As to expression, expressed by the venom duct.

The protein localises to the secreted. This is Conotoxin AbVIA from Conus abbreviatus (Abbreviated cone).